A 610-amino-acid chain; its full sequence is ESX-5 secretion system protein EccA5 (610 aa).

An ATP-binding site is contributed by 357–364 (GPPGTGKT).

This sequence belongs to the CbxX/CfxQ family. As to quaternary structure, part of the ESX-5 / type VII secretion system (T7SS), which is composed of cytosolic and membrane components.

The protein resides in the cytoplasm. Its function is as follows. Part of the ESX-5 specialized secretion system, which is responsible for the secretion of EsxN and a number of PE_PGRS and PPE proteins. EccA5 exhibits ATPase activity and may provide energy for the export of ESX-5 substrates. This is ESX-5 secretion system protein EccA5 from Mycobacterium marinum (strain ATCC BAA-535 / M).